A 459-amino-acid chain; its full sequence is Magnesium transporter MRS2-11, chloroplastic (459 aa).

A chloroplast-targeting transit peptide spans 1 to 62 (MALTPIPSTF…EALKVLSRSK (62 aa)). The tract at residues 76 to 122 (GDYESLNVSDDDDGSDSNSSDGDNGGGRDDSKKIDSSSSSSSSDSTS) is disordered. Basic and acidic residues predominate over residues 101 to 110 (GGRDDSKKID). Residues 111–122 (SSSSSSSSDSTS) are compositionally biased toward low complexity. 2 helical membrane passes run 397–417 (LLLQ…GIFG) and 430–450 (AFWL…FLMY). The short motif at 417–419 (GMN) is the Required for magnesium transport activity element.

Belongs to the CorA metal ion transporter (MIT) (TC 1.A.35.5) family. As to expression, expressed in the green part of the plant. Preferentially expressed in the spongy mesophyll cells and stomata of young leaves but also detected in cotyledons and at the base of the leaf petioles.

Its subcellular location is the plastid. The protein localises to the chloroplast membrane. Its function is as follows. High-affinity magnesium transporter that mediates the influx of magnesium in chloroplast. This is Magnesium transporter MRS2-11, chloroplastic (MRS2-11) from Arabidopsis thaliana (Mouse-ear cress).